A 202-amino-acid chain; its full sequence is Ion-translocating oxidoreductase complex subunit G (202 aa).

The helical transmembrane segment at 11–31 (AILLALIALICTALSTGIYLL) threads the bilayer. Threonine 177 is modified (FMN phosphoryl threonine).

This sequence belongs to the RnfG family. As to quaternary structure, the complex is composed of six subunits: RnfA, RnfB, RnfC, RnfD, RnfE and RnfG. FMN is required as a cofactor.

The protein resides in the cell inner membrane. Its function is as follows. Part of a membrane-bound complex that couples electron transfer with translocation of ions across the membrane. This chain is Ion-translocating oxidoreductase complex subunit G, found in Pasteurella multocida (strain Pm70).